The sequence spans 462 residues: L-seryl-tRNA(Sec) selenium transferase (462 aa).

At K292 the chain carries N6-(pyridoxal phosphate)lysine.

The protein belongs to the SelA family. Requires pyridoxal 5'-phosphate as cofactor.

The protein localises to the cytoplasm. It catalyses the reaction L-seryl-tRNA(Sec) + selenophosphate + H(+) = L-selenocysteinyl-tRNA(Sec) + phosphate. It participates in aminoacyl-tRNA biosynthesis; selenocysteinyl-tRNA(Sec) biosynthesis; selenocysteinyl-tRNA(Sec) from L-seryl-tRNA(Sec) (bacterial route): step 1/1. In terms of biological role, converts seryl-tRNA(Sec) to selenocysteinyl-tRNA(Sec) required for selenoprotein biosynthesis. This Geobacter metallireducens (strain ATCC 53774 / DSM 7210 / GS-15) protein is L-seryl-tRNA(Sec) selenium transferase.